The primary structure comprises 427 residues: Kynureninase (427 aa).

Pyridoxal 5'-phosphate is bound by residues threonine 104, threonine 105, 132 to 135 (FPSD), aspartate 213, histidine 216, and tyrosine 238. Lysine 239 is modified (N6-(pyridoxal phosphate)lysine). Residues tryptophan 267 and threonine 295 each coordinate pyridoxal 5'-phosphate.

It belongs to the kynureninase family. In terms of assembly, homodimer. Pyridoxal 5'-phosphate serves as cofactor.

It catalyses the reaction L-kynurenine + H2O = anthranilate + L-alanine + H(+). It carries out the reaction 3-hydroxy-L-kynurenine + H2O = 3-hydroxyanthranilate + L-alanine + H(+). Its pathway is amino-acid degradation; L-kynurenine degradation; L-alanine and anthranilate from L-kynurenine: step 1/1. It participates in cofactor biosynthesis; NAD(+) biosynthesis; quinolinate from L-kynurenine: step 2/3. Its function is as follows. Catalyzes the cleavage of L-kynurenine (L-Kyn) and L-3-hydroxykynurenine (L-3OHKyn) into anthranilic acid (AA) and 3-hydroxyanthranilic acid (3-OHAA), respectively. This chain is Kynureninase, found in Shouchella clausii (strain KSM-K16) (Alkalihalobacillus clausii).